A 183-amino-acid chain; its full sequence is ATP synthase subunit b, chloroplastic (183 aa).

The chain crosses the membrane as a helical span at residues 27 to 49 (LATNLINLTVVVGVLIFFGKGVL).

It belongs to the ATPase B chain family. As to quaternary structure, F-type ATPases have 2 components, F(1) - the catalytic core - and F(0) - the membrane proton channel. F(1) has five subunits: alpha(3), beta(3), gamma(1), delta(1), epsilon(1). F(0) has four main subunits: a(1), b(1), b'(1) and c(10-14). The alpha and beta chains form an alternating ring which encloses part of the gamma chain. F(1) is attached to F(0) by a central stalk formed by the gamma and epsilon chains, while a peripheral stalk is formed by the delta, b and b' chains.

Its subcellular location is the plastid. The protein localises to the chloroplast thylakoid membrane. Its function is as follows. F(1)F(0) ATP synthase produces ATP from ADP in the presence of a proton or sodium gradient. F-type ATPases consist of two structural domains, F(1) containing the extramembraneous catalytic core and F(0) containing the membrane proton channel, linked together by a central stalk and a peripheral stalk. During catalysis, ATP synthesis in the catalytic domain of F(1) is coupled via a rotary mechanism of the central stalk subunits to proton translocation. Functionally, component of the F(0) channel, it forms part of the peripheral stalk, linking F(1) to F(0). This chain is ATP synthase subunit b, chloroplastic, found in Lolium perenne (Perennial ryegrass).